Here is a 539-residue protein sequence, read N- to C-terminus: Acid-sensing ion channel 4 (539 aa).

Residues 1–68 lie on the Cytoplasmic side of the membrane; sequence MPIEIVCKIK…GPGPHGLRRT (68 aa). The chain crosses the membrane as a helical span at residues 69–89; that stretch reads LWALALLTSLAAFLYQAASLA. The Extracellular segment spans residues 90–438; the sequence is RGYLTRPHLV…EQQAAYGLSA (349 aa). 2 cysteine pairs are disulfide-bonded: Cys-118–Cys-202 and Cys-180–Cys-187. N-linked (GlcNAc...) asparagine glycans are attached at residues Asn-191, Asn-243, Asn-341, and Asn-376. 5 cysteine pairs are disulfide-bonded: Cys-296-Cys-375, Cys-318-Cys-371, Cys-322-Cys-369, Cys-331-Cys-353, and Cys-333-Cys-345. A helical membrane pass occupies residues 439 to 459; that stretch reads LLGDLGGQMGLFIGASILTLL. The GAS motif; ion selectivity filter motif lies at 452–454; the sequence is GAS. Residues 460–539 lie on the Cytoplasmic side of the membrane; sequence EILDYIYEVS…PGSLFEDFAC (80 aa). The interval 500-531 is disordered; that stretch reads KEQSPCPSRGRAEGGGASSLLPNHHHPHGPPG.

Belongs to the amiloride-sensitive sodium channel (TC 1.A.6) family. ASIC4 subfamily. As to quaternary structure, homotrimer. Heterotrimer; with other ASIC proteins producing functional channels.

The protein resides in the cell membrane. Functionally, does not exhibit measurable stand-alone pH-gated sodium channel activity but may form pH-gated heterotrimeric sodium channels. Its activity could also depend on alternative gating mechanisms. This Mus musculus (Mouse) protein is Acid-sensing ion channel 4.